Here is a 44-residue protein sequence, read N- to C-terminus: U2-agatoxin-Ao1s (44 aa).

Positions 1–9 (KKVYSFLKL) are excised as a propeptide. 3 disulfide bridges follow: cysteine 12-cysteine 28, cysteine 19-cysteine 33, and cysteine 27-cysteine 43.

Belongs to the neurotoxin 01 (U2-agtx) family. As to expression, expressed by the venom gland.

It is found in the secreted. Its function is as follows. Insect active toxin causing rapid but reversible paralysis in crickets. No activity shown in mammals. Does not show effect on mammalian voltage-gated calcium channels. This Agelena orientalis (Funnel-web spider) protein is U2-agatoxin-Ao1s.